The sequence spans 372 residues: UDP-N-acetylglucosamine--N-acetylmuramyl-(pentapeptide) pyrophosphoryl-undecaprenol N-acetylglucosamine transferase (372 aa).

UDP-N-acetyl-alpha-D-glucosamine-binding positions include T21–G23, N135, R172, S206, and Q303.

The protein belongs to the glycosyltransferase 28 family. MurG subfamily.

The protein resides in the cell membrane. It catalyses the reaction di-trans,octa-cis-undecaprenyl diphospho-N-acetyl-alpha-D-muramoyl-L-alanyl-D-glutamyl-meso-2,6-diaminopimeloyl-D-alanyl-D-alanine + UDP-N-acetyl-alpha-D-glucosamine = di-trans,octa-cis-undecaprenyl diphospho-[N-acetyl-alpha-D-glucosaminyl-(1-&gt;4)]-N-acetyl-alpha-D-muramoyl-L-alanyl-D-glutamyl-meso-2,6-diaminopimeloyl-D-alanyl-D-alanine + UDP + H(+). Its pathway is cell wall biogenesis; peptidoglycan biosynthesis. In terms of biological role, cell wall formation. Catalyzes the transfer of a GlcNAc subunit on undecaprenyl-pyrophosphoryl-MurNAc-pentapeptide (lipid intermediate I) to form undecaprenyl-pyrophosphoryl-MurNAc-(pentapeptide)GlcNAc (lipid intermediate II). The chain is UDP-N-acetylglucosamine--N-acetylmuramyl-(pentapeptide) pyrophosphoryl-undecaprenol N-acetylglucosamine transferase from Paenarthrobacter aurescens (strain TC1).